Consider the following 471-residue polypeptide: Glutamate--tRNA ligase (471 aa).

A 'HIGH' region motif is present at residues 9 to 19; the sequence is PSPTGYLHVGG. Zn(2+)-binding residues include Cys-98, Cys-100, Cys-125, and His-127. The 'KMSKS' region motif lies at 237-241; sequence KLSKR. Lys-240 provides a ligand contact to ATP.

This sequence belongs to the class-I aminoacyl-tRNA synthetase family. Glutamate--tRNA ligase type 1 subfamily. As to quaternary structure, monomer. It depends on Zn(2+) as a cofactor.

The protein resides in the cytoplasm. It carries out the reaction tRNA(Glu) + L-glutamate + ATP = L-glutamyl-tRNA(Glu) + AMP + diphosphate. Its function is as follows. Catalyzes the attachment of glutamate to tRNA(Glu) in a two-step reaction: glutamate is first activated by ATP to form Glu-AMP and then transferred to the acceptor end of tRNA(Glu). The chain is Glutamate--tRNA ligase from Shigella sonnei (strain Ss046).